Reading from the N-terminus, the 395-residue chain is ATP phosphoribosyltransferase regulatory subunit (395 aa).

This sequence belongs to the class-II aminoacyl-tRNA synthetase family. HisZ subfamily. In terms of assembly, heteromultimer composed of HisG and HisZ subunits.

It localises to the cytoplasm. Its pathway is amino-acid biosynthesis; L-histidine biosynthesis; L-histidine from 5-phospho-alpha-D-ribose 1-diphosphate: step 1/9. Required for the first step of histidine biosynthesis. May allow the feedback regulation of ATP phosphoribosyltransferase activity by histidine. This Pseudomonas savastanoi pv. phaseolicola (strain 1448A / Race 6) (Pseudomonas syringae pv. phaseolicola (strain 1448A / Race 6)) protein is ATP phosphoribosyltransferase regulatory subunit.